The following is a 191-amino-acid chain: Phospholipase A2-delta (191 aa).

A signal peptide spans 1–25; that stretch reads MIRGGALTHVALGLTVFLLLAVVHS. 6 cysteine pairs are disulfide-bonded: Cys-29–Cys-56, Cys-33–Cys-62, Cys-38–Cys-115, Cys-49–Cys-69, Cys-68–Cys-93, and Cys-75–Cys-86. Residues Tyr-48, Gly-50, and Tyr-53 each coordinate Ca(2+). His-72 is an active-site residue. Residue Asp-73 coordinates Ca(2+). The tract at residues 161–191 is disordered; it reads KADTKDGLGTNQGPQTKDGSKVSVPMNPSPS.

Belongs to the phospholipase A2 family. Ca(2+) is required as a cofactor. As to expression, specifically expressed in flowers but at a low level. Detected specifically in the pollen.

It is found in the secreted. The protein localises to the endoplasmic reticulum. The catalysed reaction is a 1,2-diacyl-sn-glycero-3-phosphocholine + H2O = a 1-acyl-sn-glycero-3-phosphocholine + a fatty acid + H(+). PA2 catalyzes the calcium-dependent hydrolysis of the 2-acyl groups in 3-sn-phosphoglycerides. Releases lysophospholipids (LPLs) and free fatty acids (FFAs) from membrane phospholipids in response to hormones and other external stimuli. Plays a role in pollen development and germination and tube growth. This Arabidopsis thaliana (Mouse-ear cress) protein is Phospholipase A2-delta (PLA2-DELTA).